The sequence spans 757 residues: Endonuclease MutS2 (757 aa).

321-328 lines the ATP pocket; it reads GPNMGGKT. One can recognise a Smr domain in the interval 681–756; that stretch reads IDIRGMTVEE…GTGVTVVEVK (76 aa).

The protein belongs to the DNA mismatch repair MutS family. MutS2 subfamily. In terms of assembly, homodimer. Binds to stalled ribosomes, contacting rRNA.

Endonuclease that is involved in the suppression of homologous recombination and thus may have a key role in the control of bacterial genetic diversity. Its function is as follows. Acts as a ribosome collision sensor, splitting the ribosome into its 2 subunits. Detects stalled/collided 70S ribosomes which it binds and splits by an ATP-hydrolysis driven conformational change. Acts upstream of the ribosome quality control system (RQC), a ribosome-associated complex that mediates the extraction of incompletely synthesized nascent chains from stalled ribosomes and their subsequent degradation. Probably generates substrates for RQC. The polypeptide is Endonuclease MutS2 (Thermotoga petrophila (strain ATCC BAA-488 / DSM 13995 / JCM 10881 / RKU-1)).